We begin with the raw amino-acid sequence, 465 residues long: uncharacterized protein (465 aa).

Transmembrane regions (helical) follow at residues 19–39, 50–70, 91–111, 140–160, 164–184, 201–221, 244–264, 288–308, 342–362, 363–383, and 403–423; these read VLGP…GEYM, MIAG…VAMI, IVGP…YTML, FIVL…LATL, LVIT…VQFG, PYGW…YLGI, AGIM…SGLM, LMVL…NGCI, IVFL…DQVV, TFSI…MVMF, and LPTV…FLGY.

It belongs to the amino acid-polyamine-organocation (APC) superfamily.

The protein localises to the cell membrane. Its function is as follows. Probable amino-acid or metabolite transport protein. This is an uncharacterized protein from Rhizobium meliloti (strain 1021) (Ensifer meliloti).